A 149-amino-acid chain; its full sequence is D-aminoacyl-tRNA deacylase (149 aa).

The short motif at 137–138 (GP) is the Gly-cisPro motif, important for rejection of L-amino acids element.

Belongs to the DTD family. As to quaternary structure, homodimer.

It is found in the cytoplasm. The enzyme catalyses glycyl-tRNA(Ala) + H2O = tRNA(Ala) + glycine + H(+). The catalysed reaction is a D-aminoacyl-tRNA + H2O = a tRNA + a D-alpha-amino acid + H(+). In terms of biological role, an aminoacyl-tRNA editing enzyme that deacylates mischarged D-aminoacyl-tRNAs. Also deacylates mischarged glycyl-tRNA(Ala), protecting cells against glycine mischarging by AlaRS. Acts via tRNA-based rather than protein-based catalysis; rejects L-amino acids rather than detecting D-amino acids in the active site. By recycling D-aminoacyl-tRNA to D-amino acids and free tRNA molecules, this enzyme counteracts the toxicity associated with the formation of D-aminoacyl-tRNA entities in vivo and helps enforce protein L-homochirality. This is D-aminoacyl-tRNA deacylase from Thioalkalivibrio sulfidiphilus (strain HL-EbGR7).